We begin with the raw amino-acid sequence, 475 residues long: Cytosolic non-specific dipeptidase (475 aa).

Serine 58 is subject to Phosphoserine. Histidine 99 contributes to the Mn(2+) binding site. The active site involves aspartate 101. Mn(2+) is bound at residue aspartate 132. Glutamate 166 acts as the Proton acceptor in catalysis. Substrate-binding positions include 166–167, aspartate 195, and histidine 228; that span reads EE. Mn(2+) contacts are provided by glutamate 167 and aspartate 195. A Phosphoserine modification is found at serine 299. 4 residues coordinate substrate: threonine 330, arginine 343, serine 417, and histidine 445. Histidine 445 is a Mn(2+) binding site.

This sequence belongs to the peptidase M20A family. Homodimer. It depends on Mn(2+) as a cofactor. As to expression, highly expressed in the parafascicular nucleus of the thalamus, tuberomammillary nucleus of the hypothalamus and the mitral cell layer of the olfactory bulb.

The protein localises to the cytoplasm. It catalyses the reaction Hydrolysis of dipeptides, preferentially hydrophobic dipeptides including prolyl amino acids.. The catalysed reaction is L-threonyl-L-threonine + H2O = 2 L-threonine. It carries out the reaction L-threonyl-L-serine + H2O = L-threonine + L-serine. The enzyme catalyses L-seryl-L-threonine + H2O = L-threonine + L-serine. It catalyses the reaction L-cysteinylglycine + H2O = L-cysteine + glycine. The catalysed reaction is L-alanyl-L-cysteine + H2O = L-cysteine + L-alanine. It carries out the reaction (S)-lactate + L-phenylalanine = N-[(S)-lactoyl]-L-phenylalanine + H2O. With respect to regulation, inhibited by bestatin. Functionally, catalyzes the peptide bond hydrolysis in dipeptides, displaying a non-redundant activity toward threonyl dipeptides. Mediates threonyl dipeptide catabolism in a tissue-specific way. Has high dipeptidase activity toward cysteinylglycine, an intermediate metabolite in glutathione metabolism. Metabolizes N-lactoyl-amino acids, both through hydrolysis to form lactic acid and amino acids, as well as through their formation by reverse proteolysis. Plays a role in the regulation of cell cycle arrest and apoptosis. The sequence is that of Cytosolic non-specific dipeptidase (Cndp2) from Mus musculus (Mouse).